The primary structure comprises 327 residues: MAADQRPLAIAVMGPTASGKTALAIEAAQRWGGEIVSVDSALVYRGLDIGAAKPDAAMRAAVPHHLLDLRDPWQVYSAAEFAADARTAMAQIVARGKIPILAGGTGLYFRAALEGLAQMPEADPAVRLAIAAEAEQVGWGALHAQLARIDPVAAARIHATDRQRIQRALEVYRISGKPISYWQTRPAGPRAPVRVLKLVLAPRQRAVLHARIAMRLDVMLADGFLTEVEQLRALPQMRAVAAPLDLPAVRAVGYRQAWEYLDGAGSLAEFRDKAVQATRQLAKRQLTWLRGELDARWFDPERDRGQLEQAVAGFLGQRRTMQQPSAV.

14-21 (GPTASGKT) serves as a coordination point for ATP. 16–21 (TASGKT) contacts substrate. Interaction with substrate tRNA stretches follow at residues 39 to 42 (DSAL) and 163 to 167 (QRIQR).

It belongs to the IPP transferase family. Monomer. The cofactor is Mg(2+).

It carries out the reaction adenosine(37) in tRNA + dimethylallyl diphosphate = N(6)-dimethylallyladenosine(37) in tRNA + diphosphate. Functionally, catalyzes the transfer of a dimethylallyl group onto the adenine at position 37 in tRNAs that read codons beginning with uridine, leading to the formation of N6-(dimethylallyl)adenosine (i(6)A). The protein is tRNA dimethylallyltransferase of Xanthomonas campestris pv. campestris (strain 8004).